Reading from the N-terminus, the 366-residue chain is Ribosomal RNA large subunit methyltransferase M (366 aa).

S-adenosyl-L-methionine is bound by residues serine 188, 221-224 (CPGG), aspartate 240, aspartate 260, and aspartate 277. Lysine 306 functions as the Proton acceptor in the catalytic mechanism.

This sequence belongs to the class I-like SAM-binding methyltransferase superfamily. RNA methyltransferase RlmE family. RlmM subfamily. In terms of assembly, monomer.

It is found in the cytoplasm. The enzyme catalyses cytidine(2498) in 23S rRNA + S-adenosyl-L-methionine = 2'-O-methylcytidine(2498) in 23S rRNA + S-adenosyl-L-homocysteine + H(+). Its function is as follows. Catalyzes the 2'-O-methylation at nucleotide C2498 in 23S rRNA. This is Ribosomal RNA large subunit methyltransferase M from Dickeya chrysanthemi (strain Ech1591) (Dickeya zeae (strain Ech1591)).